Consider the following 862-residue polypeptide: Autotaxin (862 aa).

A signal peptide spans 1–27 (MARQGCFGSYQVISLFTFAIGVNLCLG). Residues 28-35 (FTASRIKR) constitute a propeptide, removed by furin. The N-linked (GlcNAc...) asparagine glycan is linked to asparagine 53. SMB domains follow at residues 54-97 (TSGS…LKTA) and 98-142 (RGWE…GESH). 10 cysteine pairs are disulfide-bonded: cysteine 58-cysteine 75, cysteine 62-cysteine 93, cysteine 73-cysteine 86, cysteine 79-cysteine 85, cysteine 102-cysteine 119, cysteine 107-cysteine 137, cysteine 117-cysteine 130, cysteine 123-cysteine 129, cysteine 148-cysteine 194, and cysteine 156-cysteine 350. The Cell attachment site motif lies at 126–128 (RGD). Residues 144-501 (VDDDCEEIRV…PTFKYRTKVP (358 aa)) are phosphodiesterase domain. Residues aspartate 171 and threonine 209 each coordinate Zn(2+). Threonine 209 serves as the catalytic Nucleophile. Residues threonine 209, asparagine 230, and aspartate 311 each coordinate 1-(9Z-octadecenoyl)-sn-glycero-3-phosphate. Positions 209, 230, and 311 each coordinate 1-hexadecanoyl-sn-glycero-3-phosphate. 1-tetradecanoyl-sn-glycerol 3-phosphate contacts are provided by threonine 209, asparagine 230, and aspartate 311. Zn(2+)-binding residues include aspartate 311, histidine 315, aspartate 358, and histidine 359. 5 cysteine pairs are disulfide-bonded: cysteine 366-cysteine 468, cysteine 413-cysteine 805, cysteine 566-cysteine 666, cysteine 568-cysteine 651, and cysteine 774-cysteine 784. Asparagine 410 carries N-linked (GlcNAc...) asparagine glycosylation. Histidine 474 is a Zn(2+) binding site. Residue histidine 474 coordinates 1-(9Z-octadecenoyl)-sn-glycero-3-phosphate. Histidine 474 contacts 1-hexadecanoyl-sn-glycero-3-phosphate. Histidine 474 contributes to the 1-tetradecanoyl-sn-glycerol 3-phosphate binding site. N-linked (GlcNAc...) asparagine glycosylation occurs at asparagine 524. Residues 597-862 (LYGRPAVLYR…TYLHTYESEI (266 aa)) are nuclease-like domain. Aspartate 739, asparagine 741, asparagine 743, leucine 745, and aspartate 747 together coordinate Ca(2+). N-linked (GlcNAc...) asparagine glycosylation is present at asparagine 806. The tract at residues 829–850 (IEHLTGLDFYRKTSRSYSEILT) is required for secretion.

The protein belongs to the nucleotide pyrophosphatase/phosphodiesterase family. The cofactor is Zn(2+). Ca(2+) is required as a cofactor. N-glycosylation, but not furin-cleavage, plays a critical role on secretion and on lysoPLD activity. Secretion requires simultaneous glycosylation on Asn-53 and Asn-410, while probable glycosylation of Asn-410 has a preferential role on lysoPLD activity. Not O-glycosylated. Post-translationally, the interdomain disulfide bond between Cys-413 and Cys-805 is essential for catalytic activity. As to expression, expressed in brain and adipose tissue.

It localises to the secreted. The catalysed reaction is a 1-O-alkyl-sn-glycero-3-phosphoethanolamine + H2O = a 1-O-alkyl-sn-glycero-3-phosphate + ethanolamine + H(+). The enzyme catalyses a 1-acyl-sn-glycero-3-phosphoethanolamine + H2O = a 1-acyl-sn-glycero-3-phosphate + ethanolamine + H(+). It catalyses the reaction 1-(9Z-octadecenoyl)-sn-glycero-3-phosphoethanolamine + H2O = 1-(9Z-octadecenoyl)-sn-glycero-3-phosphate + ethanolamine + H(+). It carries out the reaction a 1-O-alkyl-sn-glycero-3-phosphocholine + H2O = a 1-O-alkyl-sn-glycero-3-phosphate + choline + H(+). The catalysed reaction is 1-O-(9Z-octadecenyl)-sn-glycero-3-phosphocholine + H2O = 1-O-(9Z-octadecenyl)-sn-glycero-3-phosphate + choline + H(+). The enzyme catalyses 1-O-hexadecyl-sn-glycero-3-phosphocholine + H2O = 1-O-hexadecyl-sn-glycero-3-phosphate + choline + H(+). It catalyses the reaction a 1-O-(1Z-alkenyl)-sn-glycero-3-phosphocholine + H2O = a 1-O-(1Z-alkenyl)-sn-glycero-3-phosphate + choline + H(+). It carries out the reaction a 1-acyl-sn-glycero-3-phosphocholine + H2O = a 1-acyl-sn-glycero-3-phosphate + choline + H(+). The catalysed reaction is 1-dodecanoyl-sn-glycero-3-phosphocholine + H2O = 1-dodecanoyl-sn-glycerol 3-phosphate + choline + H(+). The enzyme catalyses 1-(9Z-octadecenoyl)-sn-glycero-3-phosphocholine + H2O = 1-(9Z-octadecenoyl)-sn-glycero-3-phosphate + choline + H(+). It catalyses the reaction 1-tetradecanoyl-sn-glycero-3-phosphocholine + H2O = 1-tetradecanoyl-sn-glycerol 3-phosphate + choline + H(+). It carries out the reaction 1-decanoyl-sn-glycero-3-phosphocholine + H2O = 1-decanoyl-sn-glycero-3-phosphate + choline + H(+). The catalysed reaction is 1-octadecanoyl-sn-glycero-3-phosphocholine + H2O = 1-octadecanoyl-sn-glycero-3-phosphate + choline + H(+). The enzyme catalyses 1-hexadecanoyl-sn-glycero-3-phosphocholine + H2O = 1-hexadecanoyl-sn-glycero-3-phosphate + choline + H(+). It catalyses the reaction 1-hexanoyl-sn-glycero-3-phosphocholine + H2O = 1-hexanoyl-sn-glycero-3-phosphate + choline + H(+). It carries out the reaction 1-(9Z,12Z)-octadecadienoyl-sn-glycero-3-phosphocholine + H2O = 1-(9Z,12Z)-octadecadienoyl-sn-glycero-3-phosphate + choline + H(+). The catalysed reaction is sphing-4-enine-phosphocholine + H2O = sphing-4-enine 1-phosphate + choline + H(+). The enzyme catalyses 1-(5Z,8Z,11Z,14Z-eicosatetraenoyl)-sn-glycero-3-phosphocholine + H2O = 1-(5Z,8Z,11Z,14Z-eicosatetraenoyl)-sn-glycero-3-phosphate + choline + H(+). It catalyses the reaction a 2-acyl-sn-glycero-3-phosphocholine + H2O = a 2-acyl-sn-glycerol 3-phosphate + choline + H(+). It carries out the reaction a 1,2-diacyl-sn-glycero-3-phosphocholine + H2O = a 1,2-diacyl-sn-glycero-3-phosphate + choline + H(+). The catalysed reaction is 1,2-dioctanoyl-sn-glycero-3-phosphocholine + H2O = 1,2-dioctanoyl-sn-glycero-3-phosphate + choline + H(+). The enzyme catalyses 1,2-didecanoyl-sn-glycero-3-phosphocholine + H2O = 1,2-didecanoyl-sn-glycero-3-phosphate + choline + H(+). It catalyses the reaction a 1-acyl-sn-glycero-3-phospho-L-serine + H2O = a 1-acyl-sn-glycero-3-phosphate + L-serine + H(+). It carries out the reaction 1-(9Z-octadecenoyl)-sn-glycero-3-phospho-L-serine + H2O = 1-(9Z-octadecenoyl)-sn-glycero-3-phosphate + L-serine + H(+). The catalysed reaction is a 2-acyl-sn-glycero-3-phospho-L-serine + H2O = a 2-acyl-sn-glycerol 3-phosphate + L-serine + H(+). Its activity is regulated as follows. Inhibited by EDTA and EGTA. Its function is as follows. Secreted lysophospholipase D that hydrolyzes lysophospholipids to produce the signaling molecule lysophosphatidic acid (LPA) in extracellular fluids. Its major substrate is lysophosphatidylcholine. Can also act on sphingosylphosphorylcholine producing sphingosine-1-phosphate, a modulator of cell motility. Can hydrolyze, in vitro, bis-pNPP, to some extent pNP-TMP, and barely ATP. Involved in several motility-related processes such as angiogenesis and neurite outgrowth. Acts as an angiogenic factor by stimulating migration of smooth muscle cells and microtubule formation. Stimulates migration of melanoma cells, probably via a pertussis toxin-sensitive G protein. May have a role in induction of parturition. Possible involvement in cell proliferation and adipose tissue development. Required for LPA production in activated platelets, cleaves the sn-1 lysophospholipids to generate sn-1 lysophosphatidic acids containing predominantly 18:2 and 20:4 fatty acids. Shows a preference for the sn-1 to the sn-2 isomer of 1-O-alkyl-sn-glycero-3-phosphocholine (lyso-PAF). The protein is Autotaxin of Mus musculus (Mouse).